We begin with the raw amino-acid sequence, 301 residues long: UDP-N-acetylenolpyruvoylglucosamine reductase 1 (301 aa).

The 168-residue stretch at 29–196 (KIGGPADILI…LEAEFQLQIG (168 aa)) folds into the FAD-binding PCMH-type domain. R174 is a catalytic residue. The active-site Proton donor is S225. E295 is a catalytic residue.

It belongs to the MurB family. The cofactor is FAD.

It localises to the cytoplasm. The enzyme catalyses UDP-N-acetyl-alpha-D-muramate + NADP(+) = UDP-N-acetyl-3-O-(1-carboxyvinyl)-alpha-D-glucosamine + NADPH + H(+). It participates in cell wall biogenesis; peptidoglycan biosynthesis. Cell wall formation. The chain is UDP-N-acetylenolpyruvoylglucosamine reductase 1 (murB1) from Bacillus anthracis.